Consider the following 375-residue polypeptide: Trichodiene synthase (375 aa).

Belongs to the trichodiene synthase family.

It catalyses the reaction (2E,6E)-farnesyl diphosphate = trichodiene + diphosphate. It functions in the pathway sesquiterpene biosynthesis; trichothecene biosynthesis. In terms of biological role, TS is a member of the terpene cyclase group of enzymes. It catalyzes the isomerization and cyclization of farnesyl pyro-phosphate to form trichodiene, the first cyclic intermediate in the biosynthetic pathway for trichothecenes. It serves to branch trichothecene biosynthesis from the isoprenoid pathway. The sequence is that of Trichodiene synthase (TRI5) from Fusarium cortaderiae.